A 288-amino-acid polypeptide reads, in one-letter code: Heme oxygenase 1 (288 aa).

Residues 1 to 265 are Cytoplasmic-facing; that stretch reads MERPQPDSMP…KTPLNTHSQA (265 aa). Residues K18, H25, Y134, and R183 each coordinate heme b. The segment at 223-260 is disordered; it reads HDTKDQSPSRAPGLRQRASNKAQDSAPVETPRGKTPLN. S229 bears the Phosphoserine mark. A helical; Anchor for type IV membrane protein membrane pass occupies residues 266 to 288; that stretch reads PLLRWVLTLSFLVATVAVGLYAM.

Belongs to the heme oxygenase family. As to quaternary structure, homodimer and higher order homooligomer. Oligomerization is crucial for its stability and function in the endoplasmic reticulum. Interacts with FLVCR2; this interaction is potentiated in the presence of heme. A soluble form arises by proteolytic removal of the membrane anchor.

Its subcellular location is the endoplasmic reticulum membrane. It catalyses the reaction heme b + 3 reduced [NADPH--hemoprotein reductase] + 3 O2 = biliverdin IXalpha + CO + Fe(2+) + 3 oxidized [NADPH--hemoprotein reductase] + 3 H2O + H(+). In terms of biological role, catalyzes the oxidative cleavage of heme at the alpha-methene bridge carbon, released as carbon monoxide (CO), to generate biliverdin IXalpha, while releasing the central heme iron chelate as ferrous iron. Affords protection against programmed cell death and this cytoprotective effect relies on its ability to catabolize free heme and prevent it from sensitizing cells to undergo apoptosis. Catalyzes the oxidative cleavage of heme at the alpha-methene bridge carbon, released as carbon monoxide (CO), to generate biliverdin IXalpha, while releasing the central heme iron chelate as ferrous iron. In Pongo abelii (Sumatran orangutan), this protein is Heme oxygenase 1 (HMOX1).